We begin with the raw amino-acid sequence, 26 residues long: Omega-conotoxin TVIA (26 aa).

3 cysteine pairs are disulfide-bonded: C1-C16, C8-C19, and C15-C26. P4, P10, and P21 each carry 4-hydroxyproline.

This sequence belongs to the conotoxin O1 superfamily. In terms of tissue distribution, expressed by the venom duct.

It localises to the secreted. Omega-conotoxins act at presynaptic membranes, they bind and block voltage-gated calcium channels (Cav). The chain is Omega-conotoxin TVIA from Conus tulipa (Fish-hunting cone snail).